A 192-amino-acid polypeptide reads, in one-letter code: E3 ubiquitin-protein ligase RNF185 (192 aa).

A compositionally biased stretch (polar residues) spans 1–14 (MASKGPSASASTEN). A disordered region spans residues 1–30 (MASKGPSASASTENSSAGGPSGSSNGTGES). Residues 1–130 (MASKGPSASA…GGFQGFGFGD (130 aa)) are Cytoplasmic-facing. A compositionally biased stretch (low complexity) spans 15 to 27 (SSAGGPSGSSNGT). A required for ubiquitin ligase activity and protection against ER stress-induced cell death region spans residues 29 to 80 (ESGGQDSTFECNICLDTAKDAVISLCGHLFCWPCLHQWLETRPNRQVCPVCK). An RING-type zinc finger spans residues 39-80 (CNICLDTAKDAVISLCGHLFCWPCLHQWLETRPNRQVCPVCK). The interval 90 to 123 (PLYGRGSTGQQDPREKTPPRPQGQRPEPENRGGF) is disordered. The helical transmembrane segment at 131 to 151 (GGFQMSFGIGAFPFGIFATAF) threads the bilayer. Topologically, residues 152 to 171 (NINDGRPPPAVPGTPQYVDE) are mitochondrial intermembrane. Residues 172 to 192 (QFLSRLFLFVALVIMFWLLIA) form a helical membrane-spanning segment.

Interacts with ATG5 and BNIP1.

The protein resides in the mitochondrion outer membrane. The protein localises to the endoplasmic reticulum membrane. It carries out the reaction S-ubiquitinyl-[E2 ubiquitin-conjugating enzyme]-L-cysteine + [acceptor protein]-L-lysine = [E2 ubiquitin-conjugating enzyme]-L-cysteine + N(6)-ubiquitinyl-[acceptor protein]-L-lysine.. Its pathway is protein modification; protein ubiquitination. E3 ubiquitin-protein ligase that regulates selective mitochondrial autophagy by mediating 'Lys-63'-linked polyubiquitination of BNIP1. Acts in the endoplasmic reticulum (ER)-associated degradation (ERAD) pathway, which targets misfolded proteins that accumulate in the endoplasmic reticulum (ER) for ubiquitination and subsequent proteasome-mediated degradation. Protects cells from ER stress-induced apoptosis. Responsible for the cotranslational ubiquitination and degradation of CFTR in the ERAD pathway. Also acts as a regulator of the innate antiviral response by catalyzing 'Lys-27'-linked polyubiquitination of CGAS, thereby promoting CGAS cyclic GMP-AMP synthase activity. Preferentially associates with the E2 enzymes UBE2J1 and UBE2J2. This Rattus norvegicus (Rat) protein is E3 ubiquitin-protein ligase RNF185 (Rnf185).